The sequence spans 147 residues: Hemoglobin subunit beta-2 (147 aa).

Residues 3–147 (HWTAEEKAAI…LVDGLSQGYN (145 aa)) form the Globin domain. Heme b is bound by residues His-64 and His-93.

This sequence belongs to the globin family. In terms of assembly, heterotetramer of two alpha chains and two beta chains. Red blood cells.

Its function is as follows. Involved in oxygen transport from the lung to the various peripheral tissues. This is Hemoglobin subunit beta-2 (hbb2) from Xenopus laevis (African clawed frog).